Here is a 681-residue protein sequence, read N- to C-terminus: Heat shock 70 kDa protein (681 aa).

Positions 655-665 (NFPGGMPGAGM) are enriched in gly residues. Residues 655 to 681 (NFPGGMPGAGMPGNAPAGSGPTVEEVD) form a disordered region. Residues 666-675 (PGNAPAGSGP) are compositionally biased toward low complexity.

This sequence belongs to the heat shock protein 70 family.

The protein is Heat shock 70 kDa protein of Plasmodium falciparum.